Consider the following 317-residue polypeptide: Transaldolase (317 aa).

Catalysis depends on K132, which acts as the Schiff-base intermediate with substrate.

Belongs to the transaldolase family. Type 1 subfamily. Homodimer.

It is found in the cytoplasm. It carries out the reaction D-sedoheptulose 7-phosphate + D-glyceraldehyde 3-phosphate = D-erythrose 4-phosphate + beta-D-fructose 6-phosphate. The protein operates within carbohydrate degradation; pentose phosphate pathway; D-glyceraldehyde 3-phosphate and beta-D-fructose 6-phosphate from D-ribose 5-phosphate and D-xylulose 5-phosphate (non-oxidative stage): step 2/3. Its function is as follows. Transaldolase is important for the balance of metabolites in the pentose-phosphate pathway. This chain is Transaldolase, found in Haemophilus influenzae (strain PittGG).